A 478-amino-acid polypeptide reads, in one-letter code: MAAGGSGVGGKRSSKSDADSGFLGLRPTSVDPALRRRRRGPRNKKRGWRRLAQEPLGLEVDQFLEDVRLQERTSGGLLSEAPNEKLFFVDTGSKEKGLTKKRTKVQKKSLLLKKPLRVDLILENTSKVPAPKDVLAHQVPNAKKLRRKEQLWEKLAKQGELPREVRRAQARLLNPSATRAKPGPQDTVERPFYDLWASDNPLDRPLVGQDEFFLEQTKKKGVKRPARLHTKPSQAPAVEVAPAGASYNPSFEDHQTLLSAAHEVELQRQKEAEKLERQLALPATEQAATQESTFQELCEGLLEESDGEGEPGQGEGPEAGDAEVCPTPARLATTEKKTEQQRRREKAVHRLRVQQAALRAARLRHQELFRLRGIKAQVALRLAELARRQRRRQARREAEADKPRRLGRLKYQAPDIDVQLSSELTDSLRTLKPEGNILRDRFKSFQRRNMIEPRERAKFKRKYKVKLVEKRAFREIQL.

Over residues 1–10 (MAAGGSGVGG) the composition is skewed to gly residues. The segment at 1-51 (MAAGGSGVGGKRSSKSDADSGFLGLRPTSVDPALRRRRRGPRNKKRGWRRL) is disordered. Alanine 2 bears the N-acetylalanine mark. Serine 29 bears the Phosphoserine mark. Basic residues predominate over residues 35–49 (RRRRRGPRNKKRGWR). Serine 93 and serine 305 each carry phosphoserine. Residues 148–431 (KEQLWEKLAK…SELTDSLRTL (284 aa)) form a mediates interaction with CDKN2A/isoform tumor suppressor ARF region. The segment at 181-478 (KPGPQDTVER…EKRAFREIQL (298 aa)) is mediates interaction with NF2. A disordered region spans residues 303–344 (EESDGEGEPGQGEGPEAGDAEVCPTPARLATTEKKTEQQRRR). Positions 333-342 (TTEKKTEQQR) are enriched in basic and acidic residues. The interval 342 to 386 (RRREKAVHRLRVQQAALRAARLRHQELFRLRGIKAQVALRLAELA) is mediates interaction with human herpesvirus 8 protein ORF16. Nucleolar localization signal regions lie at residues 347–395 (AVHR…RQAR) and 396–478 (REAE…EIQL).

This sequence belongs to the NOP53 family. In terms of assembly, homooligomer. Interacts with PTEN; regulates PTEN phosphorylation and increases its stability. Interacts with RPL11; retains RPL11 into the nucleolus. Interacts with CDKN2A/isoform tumor suppressor ARF; the interaction is direct and promotes ARF nucleoplasmic relocalization and ubiquitin-mediated proteasomal degradation. Interacts with NPM1; the interaction is direct and competitive with MYC. Interacts with NF2 (via FERM domain); the interaction is direct. Interacts with p53/TP53 (via the oligomerization region); the interaction is direct and may prevent the MDM2-mediated proteasomal degradation of p53/TP53. Interacts with RIGI; may regulate RIGI through USP15-mediated 'Lys-63'-linked deubiquitination. Interacts with UBTF. As to quaternary structure, (Microbial infection) Interacts with herpes simplex virus 1 early proteins ICP22 and ICP0. (Microbial infection) Interacts with Human herpesvirus 8 protein ORF16; may sequester ORF16 in host nucleolus and reduce its antiapoptotic activity. In terms of processing, ubiquitin-mediated proteasomal degradation is regulated by c-JUN. It is associated with relocalization to the nucleoplasm and decreased homooligomerization. Post-translationally, phosphorylated upon DNA damage probably by ATM and DNA-PK; may regulate NOP53 degradation. Expressed at high levels in heart and pancreas, moderate levels in placenta, liver, skeletal muscle, and kidney, and low levels in brain and lung.

Its subcellular location is the nucleus. It localises to the nucleolus. The protein localises to the nucleoplasm. Functionally, nucleolar protein which is involved in the integration of the 5S RNP into the ribosomal large subunit during ribosome biogenesis. In ribosome biogenesis, may also play a role in rRNA transcription. Also functions as a nucleolar sensor that regulates the activation of p53/TP53 in response to ribosome biogenesis perturbation, DNA damage and other stress conditions. DNA damage or perturbation of ribosome biogenesis disrupt the interaction between NOP53 and RPL11 allowing RPL11 transport to the nucleoplasm where it can inhibit MDM2 and allow p53/TP53 activation. It may also positively regulate the function of p53/TP53 in cell cycle arrest and apoptosis through direct interaction, preventing its MDM2-dependent ubiquitin-mediated proteasomal degradation. Originally identified as a tumor suppressor, it may also play a role in cell proliferation and apoptosis by positively regulating the stability of PTEN, thereby antagonizing the PI3K-AKT/PKB signaling pathway. May also inhibit cell proliferation and increase apoptosis through its interaction with NF2. May negatively regulate NPM1 by regulating its nucleoplasmic localization, oligomerization and ubiquitin-mediated proteasomal degradation. Thereby, may prevent NPM1 interaction with MYC and negatively regulate transcription mediated by the MYC-NPM1 complex. May also regulate cellular aerobic respiration. In the cellular response to viral infection, may play a role in the attenuation of interferon-beta through the inhibition of RIGI. This chain is Ribosome biogenesis protein NOP53, found in Homo sapiens (Human).